Consider the following 975-residue polypeptide: Monofunctional C1-tetrahydrofolate synthase, mitochondrial (975 aa).

Residues 1–30 constitute a mitochondrion transit peptide; that stretch reads MSARLPFVLRRLARPQHPGSPRRLPSLCRA. The segment at 13–45 is disordered; sequence ARPQHPGSPRRLPSLCRASSGRGSGCGGGEGLL. A methylenetetrahydrofolate dehydrogenase and cyclohydrolase region spans residues 31-345; sequence SSGRGSGCGG…REQQHRRWRL (315 aa). Gly residues predominate over residues 34 to 44; that stretch reads RGSGCGGGEGL. Lysine 187 bears the N6-acetyllysine; alternate mark. Position 187 is an N6-succinyllysine; alternate (lysine 187). Residues 346–975 form a formyltetrahydrofolate synthetase region; it reads HCLKLQPLSP…TETEQVKGLF (630 aa). Residue serine 354 is modified to Phosphoserine. 420–427 is a binding site for ATP; that stretch reads TPLGEGKS. Lysine 593 is subject to N6-succinyllysine.

In the N-terminal section; belongs to the tetrahydrofolate dehydrogenase/cyclohydrolase family. It in the C-terminal section; belongs to the formate--tetrahydrofolate ligase family. Homodimer.

The protein resides in the mitochondrion. It carries out the reaction (6S)-5,6,7,8-tetrahydrofolate + formate + ATP = (6R)-10-formyltetrahydrofolate + ADP + phosphate. Its pathway is one-carbon metabolism; tetrahydrofolate interconversion. May provide the missing metabolic reaction required to link the mitochondria and the cytoplasm in the mammalian model of one-carbon folate metabolism complementing thus the enzymatic activities of MTHFD2. In Bos taurus (Bovine), this protein is Monofunctional C1-tetrahydrofolate synthase, mitochondrial (MTHFD1L).